The primary structure comprises 1064 residues: Carbamoyl phosphate synthase large chain (1064 aa).

A carboxyphosphate synthetic domain region spans residues 1-401 (MPKRNDIKKI…SLLKAVRSLE (401 aa)). Positions 129, 169, 175, 176, 208, 210, 215, 241, 242, 243, 284, and 298 each coordinate ATP. In terms of domain architecture, ATP-grasp 1 spans 133–327 (KELCERIGEP…IAKMSAKIAI (195 aa)). Mg(2+) contacts are provided by glutamine 284, glutamate 298, and asparagine 300. Mn(2+)-binding residues include glutamine 284, glutamate 298, and asparagine 300. The segment at 402-546 (IGVFHNDLQE…YSTYEWENES (145 aa)) is oligomerization domain. The interval 547–929 (KRSSKEKIIV…ALYKSFEAAK (383 aa)) is carbamoyl phosphate synthetic domain. In terms of domain architecture, ATP-grasp 2 spans 671-861 (EKALQDLEIP…MAQLATQMIL (191 aa)). ATP contacts are provided by arginine 707, serine 746, leucine 748, glutamate 752, glycine 777, valine 778, histidine 779, serine 780, glutamine 820, and glutamate 832. Residues glutamine 820, glutamate 832, and asparagine 834 each contribute to the Mg(2+) site. The Mn(2+) site is built by glutamine 820, glutamate 832, and asparagine 834. In terms of domain architecture, MGS-like spans 930–1064 (LHMADYGSVL…QSRSFTTKNI (135 aa)). Residues 930 to 1064 (LHMADYGSVL…QSRSFTTKNI (135 aa)) form an allosteric domain region.

This sequence belongs to the CarB family. In terms of assembly, composed of two chains; the small (or glutamine) chain promotes the hydrolysis of glutamine to ammonia, which is used by the large (or ammonia) chain to synthesize carbamoyl phosphate. Tetramer of heterodimers (alpha,beta)4. The cofactor is Mg(2+). It depends on Mn(2+) as a cofactor.

It carries out the reaction hydrogencarbonate + L-glutamine + 2 ATP + H2O = carbamoyl phosphate + L-glutamate + 2 ADP + phosphate + 2 H(+). The enzyme catalyses hydrogencarbonate + NH4(+) + 2 ATP = carbamoyl phosphate + 2 ADP + phosphate + 2 H(+). Its pathway is amino-acid biosynthesis; L-arginine biosynthesis; carbamoyl phosphate from bicarbonate: step 1/1. The protein operates within pyrimidine metabolism; UMP biosynthesis via de novo pathway; (S)-dihydroorotate from bicarbonate: step 1/3. In terms of biological role, large subunit of the glutamine-dependent carbamoyl phosphate synthetase (CPSase). CPSase catalyzes the formation of carbamoyl phosphate from the ammonia moiety of glutamine, carbonate, and phosphate donated by ATP, constituting the first step of 2 biosynthetic pathways, one leading to arginine and/or urea and the other to pyrimidine nucleotides. The large subunit (synthetase) binds the substrates ammonia (free or transferred from glutamine from the small subunit), hydrogencarbonate and ATP and carries out an ATP-coupled ligase reaction, activating hydrogencarbonate by forming carboxy phosphate which reacts with ammonia to form carbamoyl phosphate. This chain is Carbamoyl phosphate synthase large chain, found in Lactococcus lactis subsp. lactis (strain IL1403) (Streptococcus lactis).